Consider the following 197-residue polypeptide: Protein GrpE (197 aa).

The interval 1 to 41 (MSSKEQKTPEGQAPEEIITEQHEEVEAVEPDASAEQVDPRD) is disordered.

Belongs to the GrpE family. Homodimer.

It is found in the cytoplasm. Participates actively in the response to hyperosmotic and heat shock by preventing the aggregation of stress-denatured proteins, in association with DnaK and GrpE. It is the nucleotide exchange factor for DnaK and may function as a thermosensor. Unfolded proteins bind initially to DnaJ; upon interaction with the DnaJ-bound protein, DnaK hydrolyzes its bound ATP, resulting in the formation of a stable complex. GrpE releases ADP from DnaK; ATP binding to DnaK triggers the release of the substrate protein, thus completing the reaction cycle. Several rounds of ATP-dependent interactions between DnaJ, DnaK and GrpE are required for fully efficient folding. The polypeptide is Protein GrpE (Enterobacter sp. (strain 638)).